A 127-amino-acid polypeptide reads, in one-letter code: MLQLLLAVFIGGGTGSVARWLLSMRFNPLHQAIPLGTLTANLIGAFIIGIGFAWFSRMTNIDPVWKVLITTGFCGGLTTFSTFSAEVVFLLQEGRFGWALLNVFVNLLGSFAMTALAFWLFSASTAH.

A run of 4 helical transmembrane segments spans residues 4-24 (LLLAVFIGGGTGSVARWLLSM), 35-55 (LGTLTANLIGAFIIGIGFAWF), 71-91 (TGFCGGLTTFSTFSAEVVFLL), and 103-123 (VFVNLLGSFAMTALAFWLFSA). 2 residues coordinate Na(+): Gly75 and Thr78.

Belongs to the fluoride channel Fluc/FEX (TC 1.A.43) family.

The protein localises to the cell inner membrane. The enzyme catalyses fluoride(in) = fluoride(out). Its activity is regulated as follows. Na(+) is not transported, but it plays an essential structural role and its presence is essential for fluoride channel function. Fluoride-specific ion channel. Important for reducing fluoride concentration in the cell, thus reducing its toxicity. In Escherichia coli (strain K12 / MC4100 / BW2952), this protein is Fluoride-specific ion channel FluC.